Reading from the N-terminus, the 736-residue chain is Fidgetin (736 aa).

Disordered stretches follow at residues glycine 118–histidine 155, threonine 180–glycine 248, isoleucine 272–alanine 295, and serine 341–glutamine 438. Residues valine 128–serine 150 are compositionally biased toward low complexity. The segment covering glutamine 205–leucine 214 has biased composition (pro residues). Over residues proline 216–proline 232 the composition is skewed to low complexity. Over residues aspartate 352–aspartate 368 the composition is skewed to polar residues. ATP contacts are provided by residues alanine 467 and glycine 507–leucine 512.

The protein belongs to the AAA ATPase family.

The protein localises to the nucleus matrix. It localises to the cytoplasm. It is found in the cytoskeleton. The protein resides in the microtubule organizing center. Its subcellular location is the centrosome. In terms of biological role, ATP-dependent microtubule severing protein. Severs microtubules along their length and depolymerizes their ends, primarily the minus-end, suppressing microtubule growth from and attachment to centrosomes. Microtubule severing may promote rapid reorganization of cellular microtubule arrays and the release of microtubules from the centrosome following nucleation. Microtubule release from the mitotic spindle poles may allow depolymerization of the microtubule end proximal to the spindle pole, leading to poleward microtubule flux and poleward motion of chromosome. The sequence is that of Fidgetin (fign) from Danio rerio (Zebrafish).